Here is a 444-residue protein sequence, read N- to C-terminus: Adenylosuccinate lyase (444 aa).

N(6)-(1,2-dicarboxyethyl)-AMP contacts are provided by residues Arg9–Tyr10, Lys73–Asp75, and Thr97–Ser98. His145 acts as the Proton donor/acceptor in catalysis. Gln219 provides a ligand contact to N(6)-(1,2-dicarboxyethyl)-AMP. The active-site Proton donor/acceptor is the Ser269. N(6)-(1,2-dicarboxyethyl)-AMP is bound by residues Ser270, Lys275–Asn277, Asn283, and Ser314–Ile318.

This sequence belongs to the lyase 1 family. Adenylosuccinate lyase subfamily. Homotetramer. Residues from neighboring subunits contribute catalytic and substrate-binding residues to each active site.

It carries out the reaction N(6)-(1,2-dicarboxyethyl)-AMP = fumarate + AMP. It catalyses the reaction (2S)-2-[5-amino-1-(5-phospho-beta-D-ribosyl)imidazole-4-carboxamido]succinate = 5-amino-1-(5-phospho-beta-D-ribosyl)imidazole-4-carboxamide + fumarate. It functions in the pathway purine metabolism; AMP biosynthesis via de novo pathway; AMP from IMP: step 2/2. It participates in purine metabolism; IMP biosynthesis via de novo pathway; 5-amino-1-(5-phospho-D-ribosyl)imidazole-4-carboxamide from 5-amino-1-(5-phospho-D-ribosyl)imidazole-4-carboxylate: step 2/2. In terms of biological role, catalyzes two reactions in de novo purine nucleotide biosynthesis. Catalyzes the breakdown of 5-aminoimidazole- (N-succinylocarboxamide) ribotide (SAICAR or 2-[5-amino-1-(5-phospho-beta-D-ribosyl)imidazole-4-carboxamido]succinate) to 5-aminoimidazole-4-carboxamide ribotide (AICAR or 5-amino-1-(5-phospho-beta-D-ribosyl)imidazole-4-carboxamide) and fumarate, and of adenylosuccinate (ADS or N(6)-(1,2-dicarboxyethyl)-AMP) to adenosine monophosphate (AMP) and fumarate. This is Adenylosuccinate lyase (purB) from Archaeoglobus fulgidus (strain ATCC 49558 / DSM 4304 / JCM 9628 / NBRC 100126 / VC-16).